A 134-amino-acid chain; its full sequence is SNAPIN protein homolog (134 aa).

The stretch at 50 to 124 (QLQAELRGQL…EKEQRRRQAL (75 aa)) forms a coiled coil.

The protein belongs to the SNAPIN family. Component of the biogenesis of lysosome-related organelles complex-1 (BLOC-1) composed of Blos1, Blos2, Blos3, Blos4, Dysb, Muted, Pldn and Snapin. Interacts with Blos2 and Dysb.

It localises to the membrane. It is found in the cytoplasm. Its subcellular location is the cytosol. Component of the biogenesis of lysosome-related organelles complex-1 (BLOC-1) involved in pigment granule biogenesis. May participate in the coupling of lysosomes to microtubule plus-end-directed kinesin motor. The chain is SNAPIN protein homolog from Drosophila melanogaster (Fruit fly).